Reading from the N-terminus, the 63-residue chain is DNA-directed RNA polymerase 7 kDa subunit (63 aa).

It belongs to the poxviridae DNA-directed RNA polymerase 7 kDa subunit family. In terms of assembly, the DNA-dependent RNA polymerase used for intermediate and late genes expression consists of eight subunits 147 kDa, 133 kDa, 35 kDa, 30 kDa, 22 kDa, 19 kDa, 18 kDa and 7 kDa totalling more than 500 kDa in mass. The same holoenzyme, with the addition of the transcription-specificity factor RAP94, is used for early gene expression.

The protein resides in the virion. It carries out the reaction RNA(n) + a ribonucleoside 5'-triphosphate = RNA(n+1) + diphosphate. Its function is as follows. Part of the DNA-dependent RNA polymerase which catalyzes the transcription of viral DNA into RNA using the four ribonucleoside triphosphates as substrates. Responsible for the transcription of early, intermediate and late genes. DNA-dependent RNA polymerase associates with the early transcription factor (ETF) thereby allowing the early genes transcription. Late transcription, and probably also intermediate transcription, require newly synthesized RNA polymerase. The protein is DNA-directed RNA polymerase 7 kDa subunit (RPO7) of Myxoma virus (strain Lausanne) (MYXV).